The sequence spans 427 residues: 2-oxoglutarate and iron-dependent oxygenase JMJD4 (427 aa).

The 160-residue stretch at 147–306 (SLVNDLEDIF…NMWHFLQQEL (160 aa)) folds into the JmjC domain. Histidine 194, aspartate 196, and histidine 274 together coordinate Fe cation.

Belongs to the JMJD6 family. As to quaternary structure, interacts with ETF1. Interacts with the ETF1-GSPT1 complex. It depends on Fe(2+) as a cofactor.

It is found in the cytoplasm. The enzyme catalyses L-lysyl-[protein] + 2-oxoglutarate + O2 = 4-hydroxy-L-lysyl-[protein] + succinate + CO2. In terms of biological role, catalyzes the 2-oxoglutarate and iron-dependent C4-lysyl hydroxylation of ETF1 at 'Lys-63' thereby promoting the translational termination efficiency of ETF1. Not essential for embryonic stem cell (ESC) maintenance and the embryonic and postnatal development. The protein is 2-oxoglutarate and iron-dependent oxygenase JMJD4 (Jmjd4) of Mus musculus (Mouse).